A 149-amino-acid chain; its full sequence is Protein SprT-like (149 aa).

In terms of domain architecture, SprT-like spans 6–147; it reads LQKLTEDISL…CGKCRGKIKR (142 aa). His-67 is a binding site for Zn(2+). Glu-68 is an active-site residue. Zn(2+) is bound at residue His-71.

This sequence belongs to the SprT family. The cofactor is Zn(2+).

It localises to the cytoplasm. The sequence is that of Protein SprT-like from Bacillus velezensis (strain DSM 23117 / BGSC 10A6 / LMG 26770 / FZB42) (Bacillus amyloliquefaciens subsp. plantarum).